A 378-amino-acid polypeptide reads, in one-letter code: Erythronate-4-phosphate dehydrogenase (378 aa).

Residues serine 45 and threonine 66 each coordinate substrate. NAD(+) is bound by residues aspartate 146 and threonine 175. Arginine 208 is an active-site residue. Aspartate 232 serves as a coordination point for NAD(+). Glutamate 237 is an active-site residue. Histidine 254 serves as the catalytic Proton donor. NAD(+) is bound at residue glycine 257. Tyrosine 258 contributes to the substrate binding site.

This sequence belongs to the D-isomer specific 2-hydroxyacid dehydrogenase family. PdxB subfamily. As to quaternary structure, homodimer.

It is found in the cytoplasm. The catalysed reaction is 4-phospho-D-erythronate + NAD(+) = (R)-3-hydroxy-2-oxo-4-phosphooxybutanoate + NADH + H(+). Its pathway is cofactor biosynthesis; pyridoxine 5'-phosphate biosynthesis; pyridoxine 5'-phosphate from D-erythrose 4-phosphate: step 2/5. In terms of biological role, catalyzes the oxidation of erythronate-4-phosphate to 3-hydroxy-2-oxo-4-phosphonooxybutanoate. The protein is Erythronate-4-phosphate dehydrogenase of Shigella boydii serotype 4 (strain Sb227).